Consider the following 1219-residue polypeptide: MFGAGDEDDTDFLSPSGGARLASLFGLDQAAAGHGNEFFQYTAPKQPKKGQGTAATGNQATPKTAPATMSTPTILVATAVHAYRYTNGQYVKQGKFGAAVLGNHTAREYRILLYISQQQPVTVARIHVNFELMVRPNNYSTFYDDQRQNWSIMFESEKAAVEFNKQVCIAKCNSTSSLDAVLSQDLIVADGPAVEVGDSLEVAYTGWLFQNHVLGQVFDSTANKDKLLRLKLGSGKVIKGWEDGMLGMKKGGKRLLIVPPACAVGSEGVIGWTQATDSILVFEVEVRRVKFARDSGSDGHSVSSRDSAAPSPIPGADNLSADPVVSPPTSIPFKSGEPALRTKSNSLSEQLAINTSPDAVKAKLISRMAKMGQPMLPILPPQLDSNDSEIEDVNTLQGGGQPVVTPSVQPSLHPAHPALPQMTSQAPQPSVTGLQAPSAALMQVSSLDSHSAVSGNAQSFQPYAGMQAYAYPQASAVTSQLQPVRPLYPAPLSQPPHFQGSGDMASFLMTEARQHNTEIRMAVSKVADKMDHLMTKVEELQKHSAGNSMLIPSMSVTMETSMIMSNIQRIIQENERLKQEILEKSNRIEEQNDKISELIERNQRYVEQSNLMMEKRNNSLQTATENTQARVLHAEQEKAKVTEELAAATAQVSHLQLKMTAHQKKETELQMQLTESLKETDLLRGQLTKVQAKLSELQETSEQAQSKFKSEKQNRKQLELKVTSLEEELTDLRVEKESLEKNLSERKKKSAQERSQAEEEIDEIRKSYQEELDKLRQLLKKTRVSTDQAAAEQLSLVQAELQTQWEAKCEHLLASAKDEHLQQYQEVCAQRDAYQQKLVQLQEKCLALQAQITALTKQNEQHIKELEKNKSQMSGVEAAASDPSEKVKKIMNQVFQSLRREFELEESYNGRTILGTIMNTIKMVTLQLLNQQEQEKEESSSEEEEEKAEERPRRPSQEQSASASSGQPQAPLNRERPESPMVPSEQVVEEAVPLPPQALTTSQDGHRRKGDSEAEALSEIKDGSLPPELSCIPSHRVLGPPTSIPPEPLGPVSMDSECEESLAASPMAAKPDNPSGKVCVREVAPDGPLQESSTRLSLTSDPEEGDPLALGPESPGEPQPPQLKKDDVTSSTGPHKELSSTEAGSTVAGAALRPSHHSQRSSLSGDEEDELFKGATLKALRPKAQPEEEDEDEVSMKGRPPPTPLFGDDDDDDDIDWLG.

At Met1 the chain carries N-acetylmethionine. Ser14 and Ser23 each carry phosphoserine. A disordered region spans residues 41 to 66 (YTAPKQPKKGQGTAATGNQATPKTAP). The segment covering 53 to 66 (TAATGNQATPKTAP) has biased composition (polar residues). The tract at residues 72 to 169 (PTILVATAVH…AVEFNKQVCI (98 aa)) is important for function in growth cone organization. Lys92 is subject to N6-acetyllysine. The PPIase FKBP-type domain maps to 197–290 (GDSLEVAYTG…VFEVEVRRVK (94 aa)). Residues 294-349 (DSGSDGHSVSSRDSAAPSPIPGADNLSADPVVSPPTSIPFKSGEPALRTKSNSLSE) form a disordered region. A phosphoserine mark is found at Ser307, Ser311, Ser326, Ser344, Ser346, and Ser356. Positions 381 to 433 (PQLDSNDSEIEDVNTLQGGGQPVVTPSVQPSLHPAHPALPQMTSQAPQPSVTG) are disordered. The segment covering 421–433 (QMTSQAPQPSVTG) has biased composition (polar residues). Coiled coils occupy residues 522–789 (AVSK…TDQA), 818–878 (DEHL…GVEA), and 925–951 (TLQL…AEER). Ser619 carries the phosphoserine modification. Positions 739 to 761 (LEKNLSERKKKSAQERSQAEEEI) are disordered. Residues 931–1219 (QQEQEKEESS…DDDDDIDWLG (289 aa)) form a disordered region. Residues Ser939, Ser940, Ser941, and Ser956 each carry the phosphoserine modification. A compositionally biased stretch (low complexity) spans 957-971 (QEQSASASSGQPQAP). A phosphoserine mark is found at Ser979, Ser1024, Ser1056, Ser1061, Ser1065, and Ser1097. Residues 1090 to 1100 (QESSTRLSLTS) show a composition bias toward polar residues. The residue at position 1099 (Thr1099) is a Phosphothreonine. The residue at position 1114 (Ser1114) is a Phosphoserine. Residues 1123–1139 (LKKDDVTSSTGPHKELS) show a composition bias toward basic and acidic residues. Phosphoserine is present on residues Ser1158, Ser1161, Ser1162, Ser1164, and Ser1195. Position 1203 is a phosphothreonine (Thr1203). Residues 1207–1219 (GDDDDDDDIDWLG) show a composition bias toward acidic residues.

It belongs to the FKBP-type PPIase family. In terms of assembly, interacts with WIP and actin. Interacts with TBC1D23.

It is found in the cytoplasm. Its subcellular location is the cell projection. The protein resides in the axon. It localises to the early endosome. Its function is as follows. May be involved in the cytoskeletal organization of neuronal growth cones. Seems to be inactive as a PPIase. Involved in the transport of early endosomes at the level of transition between microfilament-based and microtubule-based movement. This chain is FK506-binding protein 15 (FKBP15), found in Homo sapiens (Human).